An 830-amino-acid chain; its full sequence is GPI ethanolamine phosphate transferase 2 (830 aa).

The first 32 residues, 1-32 (MNLKQFTCLSCAQLLAILLFIFAFFPRKIVLT), serve as a signal peptide directing secretion. At 33 to 321 (GISKQDPDQD…QYLETVQQID (289 aa)) the chain is on the lumenal side. N-linked (GlcNAc...) asparagine glycans are attached at residues N145, N185, and N298. The helical transmembrane segment at 322-342 (IVPTIAALFGMPIPMNSVGII) threads the bilayer. Residues 343–405 (IPDFLQLLPN…TKSATNYNYP (63 aa)) lie on the Cytoplasmic side of the membrane. A helical membrane pass occupies residues 406-426 (LLTLAFVGFLIITIIAIYVLL). At 427–439 (RYSGPDFWQLRVS) the chain is on the lumenal side. Residues 440 to 460 (SLSVLLVSIILGVSTFASSFI) traverse the membrane as a helical segment. The Cytoplasmic portion of the chain corresponds to 461-469 (EEEHQLWWW). Residues 470-490 (IVTAFSAVPLFVYRLNVLIIV) traverse the membrane as a helical segment. Residues 491-533 (RWFIMMACVRSIKFWNNSGQKFIYSNVMSNLLNQNPSWKWCLN) lie on the Lumenal side of the membrane. Residue N506 is glycosylated (N-linked (GlcNAc...) asparagine). The helical transmembrane segment at 534 to 554 (MLTFLVLIMASAGFQVLHFIV) threads the bilayer. At 555 to 598 (TTILVGLCFTYKISWEIVNGNQAEIPLFMHDLLAKIDFAPTESN) the chain is on the cytoplasmic side. The helical transmembrane segment at 599 to 619 (LIVLARVFFQAWAIVVISRLV) threads the bilayer. At 620 to 651 (LTKLKVLNKNYLIKDMKVYITILLMFQTSSQN) the chain is on the lumenal side. The helical transmembrane segment at 652-672 (IGQFLVFQILESQIFYFFQNI) threads the bilayer. The Cytoplasmic segment spans residues 673-682 (PTASLTSTSK). Residues 683-703 (IYFSNLVSLILQNFTFFQFGG) traverse the membrane as a helical segment. Topologically, residues 704–724 (TNSISTIDLGNAYHGVSSDYN) are lumenal. Residues 725-745 (IYVVGILMSVANFAPAIYWSM) form a helical membrane-spanning segment. Residues 746–768 (LPWSINYASIPAQVKLQTFIRSK) lie on the Cytoplasmic side of the membrane. A helical membrane pass occupies residues 769–789 (LPAFTYHCIFGTCLMTACVVL). At 790-805 (RFHLFIWSVFSPKLCY) the chain is on the lumenal side. Residues 806 to 826 (FLGWNFVMGLLNGWLPELALL) traverse the membrane as a helical segment. At 827–830 (CALD) the chain is on the cytoplasmic side.

Belongs to the PIGG/PIGN/PIGO family. PIGG subfamily. Post-translationally, N-glycosylated.

The protein resides in the endoplasmic reticulum membrane. The protein operates within glycolipid biosynthesis; glycosylphosphatidylinositol-anchor biosynthesis. Its function is as follows. Ethanolamine phosphate transferase involved in glycosylphosphatidylinositol-anchor biosynthesis. Transfers ethanolamine phosphate to the GPI second mannose. Although not essential, addition of ethanolamine phosphate to the second mannose plays an important role in cell separation via the GPI-based modification of daughter-specific proteins. The protein is GPI ethanolamine phosphate transferase 2 (LAS21) of Saccharomyces cerevisiae (strain ATCC 204508 / S288c) (Baker's yeast).